A 111-amino-acid polypeptide reads, in one-letter code: Large ribosomal subunit protein uL23 (111 aa).

This sequence belongs to the universal ribosomal protein uL23 family. Part of the 50S ribosomal subunit. Contacts protein L29, and trigger factor when it is bound to the ribosome.

One of the early assembly proteins it binds 23S rRNA. One of the proteins that surrounds the polypeptide exit tunnel on the outside of the ribosome. Forms the main docking site for trigger factor binding to the ribosome. This is Large ribosomal subunit protein uL23 from Nitrosomonas europaea (strain ATCC 19718 / CIP 103999 / KCTC 2705 / NBRC 14298).